Here is a 283-residue protein sequence, read N- to C-terminus: Orotidine 5'-phosphate decarboxylase (283 aa).

Catalysis depends on K97, which acts as the Proton donor.

Belongs to the OMP decarboxylase family. Type 2 subfamily.

It carries out the reaction orotidine 5'-phosphate + H(+) = UMP + CO2. The protein operates within pyrimidine metabolism; UMP biosynthesis via de novo pathway; UMP from orotate: step 2/2. This chain is Orotidine 5'-phosphate decarboxylase, found in Clostridium botulinum (strain Okra / Type B1).